The chain runs to 398 residues: Acetate kinase (398 aa).

Mg(2+) is bound at residue asparagine 8. ATP is bound at residue lysine 15. Arginine 92 is a substrate binding site. Aspartate 149 serves as the catalytic Proton donor/acceptor. ATP-binding positions include 209 to 213 (HLGNG), 283 to 285 (DFR), and 331 to 335 (GVGEN). Residue glutamate 385 coordinates Mg(2+).

The protein belongs to the acetokinase family. Homodimer. It depends on Mg(2+) as a cofactor. The cofactor is Mn(2+).

Its subcellular location is the cytoplasm. It catalyses the reaction acetate + ATP = acetyl phosphate + ADP. It functions in the pathway metabolic intermediate biosynthesis; acetyl-CoA biosynthesis; acetyl-CoA from acetate: step 1/2. In terms of biological role, catalyzes the formation of acetyl phosphate from acetate and ATP. Can also catalyze the reverse reaction. In Corynebacterium efficiens (strain DSM 44549 / YS-314 / AJ 12310 / JCM 11189 / NBRC 100395), this protein is Acetate kinase.